Here is a 374-residue protein sequence, read N- to C-terminus: Large ribosomal subunit protein bL27m (374 aa).

Residues 1 to 41 (MLRLSGVKSAVRARAAAGAAFSVSLSGPQAVSLLALPLVRH) constitute a mitochondrion transit peptide.

The protein belongs to the bacterial ribosomal protein bL27 family.

The protein localises to the mitochondrion. Its function is as follows. Component of the large subunit of mitochondrial ribosome. The protein is Large ribosomal subunit protein bL27m (MRPL2) of Yarrowia lipolytica (strain CLIB 122 / E 150) (Yeast).